The following is a 374-amino-acid chain: Putative phosphoserine aminotransferase (374 aa).

Residue Arg48 coordinates L-glutamate. Residues 82–83 (AT), Phe106, Thr152, Asp174, and Gln197 each bind pyridoxal 5'-phosphate. The residue at position 198 (Lys198) is an N6-(pyridoxal phosphate)lysine. Residue 249-250 (NT) coordinates pyridoxal 5'-phosphate.

It belongs to the class-V pyridoxal-phosphate-dependent aminotransferase family. SerC subfamily. As to quaternary structure, homodimer. Pyridoxal 5'-phosphate is required as a cofactor.

The protein resides in the cytoplasm. The catalysed reaction is O-phospho-L-serine + 2-oxoglutarate = 3-phosphooxypyruvate + L-glutamate. The enzyme catalyses 4-(phosphooxy)-L-threonine + 2-oxoglutarate = (R)-3-hydroxy-2-oxo-4-phosphooxybutanoate + L-glutamate. Its pathway is amino-acid biosynthesis; L-serine biosynthesis; L-serine from 3-phospho-D-glycerate: step 2/3. It functions in the pathway cofactor biosynthesis; pyridoxine 5'-phosphate biosynthesis; pyridoxine 5'-phosphate from D-erythrose 4-phosphate: step 3/5. Catalyzes the reversible conversion of 3-phosphohydroxypyruvate to phosphoserine and of 3-hydroxy-2-oxo-4-phosphonooxybutanoate to phosphohydroxythreonine. The protein is Putative phosphoserine aminotransferase of Mycobacterium avium (strain 104).